We begin with the raw amino-acid sequence, 194 residues long: Inner membrane-spanning protein YciB (194 aa).

5 helical membrane passes run 1–21, 49–69, 77–97, 120–140, and 150–170; these read MKLL…KTTN, EKMH…TILF, WKPS…GWVS, LNYS…YVAY, and FKLF…GVYI.

The protein belongs to the YciB family.

The protein localises to the cell inner membrane. Its function is as follows. Plays a role in cell envelope biogenesis, maintenance of cell envelope integrity and membrane homeostasis. This Hahella chejuensis (strain KCTC 2396) protein is Inner membrane-spanning protein YciB.